Consider the following 677-residue polypeptide: MKVLGRSFFWVLFPVLPWAVQAVEHEEVAQRVIKLHRGRGVAAMQSRQWVRDSCRKLSGLLRQKNAVLNKLKTAIGAVEKDVGLSDEEKLFQVHTFEIFQKELNESENSVFQAVYGLQRALQGDYKDVVNMKESSRQRLEALREAAIKEETEYMELLAAEKHQVEALKNMQHQNQSLSMLDEILEDVRKAADRLEEEIEEHAFDDNKSVKGVNFEAVLRVEEEEANSKQNITKREVEDDLGLSMLIDSQNNQYILTKPRDSTIPRADHHFIKDIVTIGMLSLPCGWLCTAIGLPTMFGYIICGVLLGPSGLNSIKSIVQVETLGEFGVFFTLFLVGLEFSPEKLRKVWKISLQGPCYMTLLMIAFGLLWGHLLRIKPTQSVFISTCLSLSSTPLVSRFLMGSARGDKEGDIDYSTVLLGMLVTQDVQLGLFMAVMPTLIQAGASASSSIVVEVLRILVLIGQILFSLAAVFLLCLVIKKYLIGPYYRKLHMESKGNKEILILGISAFIFLMLTVTELLDVSMELGCFLAGALVSSQGPVVTEEIATSIEPIRDFLAIVFFASIGLHVFPTFVAYELTVLVFLTLSVVVMKFLLAALVLSLILPRSSQYIKWIVSAGLAQVSEFSFVLGSRARRAGVISREVYLLILSVTTLSLLLAPVLWRAAITRCVPRPERRSSL.

Positions 1–22 are cleaved as a signal peptide; sequence MKVLGRSFFWVLFPVLPWAVQA. A coiled-coil region spans residues 124–204; it reads DYKDVVNMKE…EEEIEEHAFD (81 aa). Residues Asn206 and Asn230 are each glycosylated (N-linked (GlcNAc...) asparagine). Transmembrane regions (helical) follow at residues 286–306, 317–337, 350–370, 416–436, 456–476, 498–518, 554–574, 578–598, 608–628, and 640–660; these read WLCT…GVLL, IVQV…LVGL, ISLQ…LLWG, VLLG…AVMP, ILVL…LCLV, EILI…TELL, FLAI…FVAY, VLVF…ALVL, YIKW…FVLG, and EVYL…PVLW.

It belongs to the monovalent cation:proton antiporter 2 (CPA2) transporter (TC 2.A.37) family. Expressed in the cornea, lens capsule and choroid-retinal pigment epithelium (at protein level).

It localises to the membrane. Functionally, probable Na(+)/H(+) antiporter. This chain is Transmembrane and coiled-coil domain-containing protein 3 (TMCO3), found in Homo sapiens (Human).